Here is a 59-residue protein sequence, read N- to C-terminus: Large ribosomal subunit protein bL32 (59 aa).

Positions 1 to 22 are enriched in basic residues; sequence MAVPKKKTSNSKRDSRRAHWNR. The disordered stretch occupies residues 1-59; that stretch reads MAVPKKKTSNSKRDSRRAHWNRKANLAAQRALSTGKSILTGRAKGFEYPTKDDDEDDDE.

It belongs to the bacterial ribosomal protein bL32 family.

The sequence is that of Large ribosomal subunit protein bL32 from Acaryochloris marina (strain MBIC 11017).